The chain runs to 44 residues: Photosystem II reaction center protein K (44 aa).

The propeptide occupies Met-1–Ser-7. A helical membrane pass occupies residues Leu-23–Phe-43.

It belongs to the PsbK family. As to quaternary structure, PSII is composed of 1 copy each of membrane proteins PsbA, PsbB, PsbC, PsbD, PsbE, PsbF, PsbH, PsbI, PsbJ, PsbK, PsbL, PsbM, PsbT, PsbX, PsbY, PsbZ, Psb30/Ycf12, at least 3 peripheral proteins of the oxygen-evolving complex and a large number of cofactors. It forms dimeric complexes.

Its subcellular location is the plastid. It is found in the chloroplast thylakoid membrane. In terms of biological role, one of the components of the core complex of photosystem II (PSII). PSII is a light-driven water:plastoquinone oxidoreductase that uses light energy to abstract electrons from H(2)O, generating O(2) and a proton gradient subsequently used for ATP formation. It consists of a core antenna complex that captures photons, and an electron transfer chain that converts photonic excitation into a charge separation. The chain is Photosystem II reaction center protein K from Phaeodactylum tricornutum (strain CCAP 1055/1).